The sequence spans 941 residues: Cilia- and flagella-associated protein 69 (941 aa).

Residues 1 to 10 (MWTEEAAATA) show a composition bias toward low complexity. Residues 1–23 (MWTEEAAATAEARESGIRNKSSS) are disordered.

It is found in the cell projection. It localises to the cilium. The protein resides in the flagellum. Functionally, cilium- and flagellum-associated protein. In the olfactory epithelium, regulates the speed of activation and termination of the odor response and thus contributes to the robustness of olfactory transduction pathways. Required for sperm flagellum assembly and stability. The chain is Cilia- and flagella-associated protein 69 from Papio anubis (Olive baboon).